We begin with the raw amino-acid sequence, 144 residues long: Galectin a (144 aa).

One can recognise a Galectin domain in the interval 1–138 (DHIDLEFDVG…DAVLRKLCVV (138 aa)).

Tetramer.

Lectin that binds beta-galactoside and a wide array of complex carbohydrates. The protein is Galectin a of Aplysina lactuca (Marine sponge).